A 438-amino-acid chain; its full sequence is 23S rRNA (uracil(1939)-C(5))-methyltransferase RlmD (438 aa).

The 65-residue stretch at 4 to 68 (FYTPGRRTAT…RHFARGRVTR (65 aa)) folds into the TRAM domain. [4Fe-4S] cluster is bound by residues Cys81, Cys87, Cys90, and Cys167. The S-adenosyl-L-methionine site is built by Gln269, Phe298, Asn303, Glu319, Asn346, and Asp367. Cys393 functions as the Nucleophile in the catalytic mechanism.

Belongs to the class I-like SAM-binding methyltransferase superfamily. RNA M5U methyltransferase family. RlmD subfamily.

It carries out the reaction uridine(1939) in 23S rRNA + S-adenosyl-L-methionine = 5-methyluridine(1939) in 23S rRNA + S-adenosyl-L-homocysteine + H(+). Its function is as follows. Catalyzes the formation of 5-methyl-uridine at position 1939 (m5U1939) in 23S rRNA. The chain is 23S rRNA (uracil(1939)-C(5))-methyltransferase RlmD from Edwardsiella ictaluri (strain 93-146).